A 397-amino-acid polypeptide reads, in one-letter code: Elongation factor Tu (397 aa).

In terms of domain architecture, tr-type G spans 10–206; the sequence is KPHVNIGTIG…AVDTYIPTPE (197 aa). The segment at 19 to 26 is G1; it reads GHVDHGKT. 19-26 is a GTP binding site; it reads GHVDHGKT. Residue Thr-26 coordinates Mg(2+). Residues 60–64 form a G2 region; that stretch reads GITIN. The G3 stretch occupies residues 81-84; it reads DCPG. Residues 81 to 85 and 136 to 139 contribute to the GTP site; these read DCPGH and NKSD. A G4 region spans residues 136–139; the sequence is NKSD. Residues 174 to 176 are G5; the sequence is SAL.

This sequence belongs to the TRAFAC class translation factor GTPase superfamily. Classic translation factor GTPase family. EF-Tu/EF-1A subfamily. As to quaternary structure, monomer.

It is found in the cytoplasm. The enzyme catalyses GTP + H2O = GDP + phosphate + H(+). Its function is as follows. GTP hydrolase that promotes the GTP-dependent binding of aminoacyl-tRNA to the A-site of ribosomes during protein biosynthesis. This chain is Elongation factor Tu, found in Clostridium kluyveri (strain ATCC 8527 / DSM 555 / NBRC 12016 / NCIMB 10680 / K1).